The following is a 189-amino-acid chain: Chitin synthase 1 (189 aa).

This sequence belongs to the chitin synthase family. Class I subfamily.

It localises to the cell membrane. It catalyses the reaction [(1-&gt;4)-N-acetyl-beta-D-glucosaminyl](n) + UDP-N-acetyl-alpha-D-glucosamine = [(1-&gt;4)-N-acetyl-beta-D-glucosaminyl](n+1) + UDP + H(+). In terms of biological role, polymerizes chitin, a structural polymer of the cell wall and septum, by transferring the sugar moiety of UDP-GlcNAc to the non-reducing end of the growing chitin polymer. The polypeptide is Chitin synthase 1 (CHS1) (Ajellomyces capsulatus (Darling's disease fungus)).